The primary structure comprises 331 residues: Adenine deaminase (331 aa).

Zn(2+)-binding residues include His17, His19, and His197. The Proton donor role is filled by Glu200. Asp278 lines the Zn(2+) pocket. Asp279 serves as a coordination point for substrate.

The protein belongs to the metallo-dependent hydrolases superfamily. Adenosine and AMP deaminases family. Adenine deaminase type 2 subfamily. Zn(2+) serves as cofactor.

The catalysed reaction is adenine + H2O + H(+) = hypoxanthine + NH4(+). Catalyzes the hydrolytic deamination of adenine to hypoxanthine. Plays an important role in the purine salvage pathway and in nitrogen catabolism. This Wolinella succinogenes (strain ATCC 29543 / DSM 1740 / CCUG 13145 / JCM 31913 / LMG 7466 / NCTC 11488 / FDC 602W) (Vibrio succinogenes) protein is Adenine deaminase.